Here is a 364-residue protein sequence, read N- to C-terminus: Poly(3-hydroxyalkanoate) polymerase subunit PhaE (364 aa).

Residues 322–364 (SGKTPTTALKAPAPATKATEKPATRATTRRKTAAKPTGGTADD) are disordered. A compositionally biased stretch (low complexity) spans 324–338 (KTPTTALKAPAPATK).

Belongs to the PHA/PHB synthase family. Type III PhaE subfamily. Forms a heterodimer with PhaC, which may multimerize in the presence of 3-hydroxybutyryl-CoA.

It localises to the cytoplasm. Its pathway is biopolymer metabolism; poly-(R)-3-hydroxybutanoate biosynthesis. In terms of biological role, polymerizes D(-)-3-hydroxybutyryl-CoA to create polyhydroxybutyrate (PHB) which consists of thousands of hydroxybutyrate molecules linked end to end. This subunit has no catalytic activity but enhances the activity of PhaC, the catalytic subunit. This Thiocystis violacea protein is Poly(3-hydroxyalkanoate) polymerase subunit PhaE.